Reading from the N-terminus, the 141-residue chain is Period circadian protein (141 aa).

The segment at 1 to 141 is disordered; that stretch reads EGSGGSGSSG…VTLTESLLNK (141 aa). Residues 11 to 23 are compositionally biased toward polar residues; that stretch reads HFTTGSNVHMSSV. A compositionally biased stretch (gly residues) spans 29–68; that stretch reads GGTGGTGTGTGTGTGTGTGTGTGTGTGTGTGTGTGTGTGT. A run of 19 repeats spans residues 30–31, 33–34, 35–36, 37–38, 39–40, 41–42, 43–44, 45–46, 47–48, 49–50, 51–52, 53–54, 55–56, 57–58, 59–60, 61–62, 63–64, 65–66, and 67–68. Residues 30 to 94 are 32 X 2 AA approximate tandem repeats of G-T; the sequence is GTGGTGTGTG…ANGTGTGKGT (65 aa). One copy of the 20; approximate repeat lies at 69 to 70; that stretch reads AS. Residues 69–85 show a composition bias toward low complexity; that stretch reads ASGTATGTASGTATGTA. Repeat 21 spans residues 71–72; the sequence is GT. The 22; approximate repeat unit spans residues 73–74; it reads AT. Repeat 23 spans residues 75-76; the sequence is GT. The stretch at 77–78 is one 24; approximate repeat; the sequence is AS. The stretch at 79-80 is repeat 25; the sequence is GT. Residues 81–82 form a 26; approximate repeat; that stretch reads AT. Repeat unit 27 spans residues 83-84; it reads GT. The 28; approximate repeat unit spans residues 85 to 86; it reads AN. 2 repeat units span residues 87-88 and 89-90. A 31; approximate repeat occupies 91–92; the sequence is GK. The stretch at 93-94 is repeat 32; it reads GT. Residues 101–113 show a composition bias toward gly residues; that stretch reads SGSGSGTGTGTGT. A compositionally biased stretch (low complexity) spans 114–129; sequence GTTTTTTTGNNSSSST. Residues 130–141 are compositionally biased toward polar residues; that stretch reads PPVTLTESLLNK.

As to quaternary structure, forms a heterodimer with timeless (TIM); the complex then translocates into the nucleus. Phosphorylated with a circadian rhythmicity, probably by the double-time protein (dbt). Phosphorylation could be implicated in the stability of per monomer and in the formation of heterodimer per-tim.

The protein resides in the nucleus. It localises to the cytoplasm. Its subcellular location is the perinuclear region. Its function is as follows. Essential for biological clock functions. Determines the period length of circadian and ultradian rhythms; an increase in PER dosage leads to shortened circadian rhythms and a decrease leads to lengthened circadian rhythms. Essential for the circadian rhythmicity of locomotor activity, eclosion behavior, and for the rhythmic component of the male courtship song that originates in the thoracic nervous system. The biological cycle depends on the rhythmic formation and nuclear localization of the TIM-PER complex. Light induces the degradation of TIM, which promotes elimination of PER. Nuclear activity of the heterodimer coordinatively regulates PER and TIM transcription through a negative feedback loop. Behaves as a negative element in circadian transcriptional loop. Does not appear to bind DNA, suggesting indirect transcriptional inhibition. This is Period circadian protein (per) from Drosophila serrata (Fruit fly).